We begin with the raw amino-acid sequence, 398 residues long: MESVLSKYENQITIFTDYLEEYPDTDELVWILGKQHLLKTEKSKLLSDISARLWFTYRRKFSPIGGTGPSSDAGWGCMLRCGQMMLAQALICRHLGRDWSWEKQKEQPKEYQRILQCFLDRKDCCYSIHQMAQMGVGEGKSIGEWFGPNTVAQVLKKLALFDEWNSLAVYVSMDNTVVIEDIKKMCRVLPLGADTAGDRPPDSLTASNLSKGTSAYCSAWKPLLLIVPLRLGINQINPVYVDAFKECFKMPQSLGALGGKPNNAYYFIGFLGDELIFLDPHTTQTFVDTGENGTVNDQTFHCLQSPQRMNILNLDPSVALGFFCKEEKDFDNWCSLVQKEILKENLRMFELVQKHPSHWPPFVPPAKPEVTTTGAEFIDSTEQLEEFDLEEDFEILSV.

C77 acts as the Nucleophile in catalysis. Catalysis depends on residues D279 and H281. Positions 393 to 396 (FEIL) match the LIR motif.

It belongs to the peptidase C54 family. As to quaternary structure, interacts with ATG9A; the interaction is direct.

It localises to the cytoplasm. The enzyme catalyses [protein]-C-terminal L-amino acid-glycyl-phosphatidylethanolamide + H2O = [protein]-C-terminal L-amino acid-glycine + a 1,2-diacyl-sn-glycero-3-phosphoethanolamine. Its activity is regulated as follows. Inhibited by N-ethylmaleimide. Redox-regulated during autophagy since reducing conditions activate ATG4A whereas an oxidizing environment such as the presence of H(2)O(2) inhibits its activity. In terms of biological role, cysteine protease that plays a key role in autophagy by mediating both proteolytic activation and delipidation of ATG8 family proteins. The protease activity is required for proteolytic activation of ATG8 family proteins: cleaves the C-terminal amino acid of ATG8 proteins to reveal a C-terminal glycine. Exposure of the glycine at the C-terminus is essential for ATG8 proteins conjugation to phosphatidylethanolamine (PE) and insertion to membranes, which is necessary for autophagy. Preferred substrate is GABARAPL2 followed by MAP1LC3A and GABARAP. Protease activity is also required to counteract formation of high-molecular weight conjugates of ATG8 proteins (ATG8ylation): acts as a deubiquitinating-like enzyme that removes ATG8 conjugated to other proteins, such as ATG3. In addition to the protease activity, also mediates delipidation of ATG8 family proteins. Catalyzes delipidation of PE-conjugated forms of ATG8 proteins during macroautophagy. Compared to ATG4B, the major protein for proteolytic activation of ATG8 proteins, shows weaker ability to cleave the C-terminal amino acid of ATG8 proteins, while it displays stronger delipidation activity. Involved in phagophore growth during mitophagy independently of its protease activity and of ATG8 proteins: acts by regulating ATG9A trafficking to mitochondria and promoting phagophore-endoplasmic reticulum contacts during the lipid transfer phase of mitophagy. The polypeptide is Cysteine protease ATG4A (Pongo abelii (Sumatran orangutan)).